A 551-amino-acid chain; its full sequence is Crossover junction endonuclease EME1B (551 aa).

2 disordered regions span residues 1–55 (MNDH…PIFV) and 187–239 (TTLP…RLEK). Positions 37 to 51 (SDPTPQKQPPESSFT) are enriched in polar residues. Over residues 202 to 239 (SKEDKTSAMEEKKLRKEQERLEKAASKAEEAERKRLEK) the composition is skewed to basic and acidic residues. Residues 203–253 (KEDKTSAMEEKKLRKEQERLEKAASKAEEAERKRLEKEKKKWEKGKLALKS) are a coiled coil. Residues 287–484 (NPIERSIVWT…PSMKSLLKVY (198 aa)) enclose the ERCC4 domain.

It belongs to the EME1/MMS4 family. In terms of assembly, forms a heterodimer with MUS81. It depends on Mg(2+) as a cofactor. Ca(2+) is required as a cofactor.

The protein resides in the nucleus. In terms of biological role, interacts with MUS81 to form a DNA structure-specific endonuclease with substrate preference for branched DNA structures with a 5'-end at the branch nick. Typical substrates include 3'-flap structures, D-loops, replication forks, nicked Holliday junctions and also intact Holliday junctions with a reduced efficiency. May be required in mitosis for the processing of stalled or collapsed replication fork intermediates. Plays a role in DNA repair and in genotoxic stress-induced homologous recombination (HR) in somatic cells. Mediates a subset of meiotic recombination events that are insensitive to crossover interference. The polypeptide is Crossover junction endonuclease EME1B (EME1B) (Arabidopsis thaliana (Mouse-ear cress)).